We begin with the raw amino-acid sequence, 495 residues long: UDP-N-acetylmuramoyl-L-alanyl-D-glutamate--2,6-diaminopimelate ligase (495 aa).

Residues leucine 27, serine 29, and 44-46 (HQT) each bind UDP-N-acetyl-alpha-D-muramoyl-L-alanyl-D-glutamate. ATP is bound at residue 116-122 (GTNGKTT). Residues asparagine 157, 158-159 (TT), serine 185, glutamine 191, and arginine 193 each bind UDP-N-acetyl-alpha-D-muramoyl-L-alanyl-D-glutamate. Lysine 225 carries the post-translational modification N6-carboxylysine. Meso-2,6-diaminopimelate is bound by residues arginine 390, 414–417 (DNPR), glycine 465, and glutamate 469. Residues 414-417 (DNPR) carry the Meso-diaminopimelate recognition motif motif.

It belongs to the MurCDEF family. MurE subfamily. Requires Mg(2+) as cofactor. Carboxylation is probably crucial for Mg(2+) binding and, consequently, for the gamma-phosphate positioning of ATP.

The protein resides in the cytoplasm. The catalysed reaction is UDP-N-acetyl-alpha-D-muramoyl-L-alanyl-D-glutamate + meso-2,6-diaminopimelate + ATP = UDP-N-acetyl-alpha-D-muramoyl-L-alanyl-gamma-D-glutamyl-meso-2,6-diaminopimelate + ADP + phosphate + H(+). It functions in the pathway cell wall biogenesis; peptidoglycan biosynthesis. Its function is as follows. Catalyzes the addition of meso-diaminopimelic acid to the nucleotide precursor UDP-N-acetylmuramoyl-L-alanyl-D-glutamate (UMAG) in the biosynthesis of bacterial cell-wall peptidoglycan. This chain is UDP-N-acetylmuramoyl-L-alanyl-D-glutamate--2,6-diaminopimelate ligase, found in Photorhabdus laumondii subsp. laumondii (strain DSM 15139 / CIP 105565 / TT01) (Photorhabdus luminescens subsp. laumondii).